The sequence spans 358 residues: Methylthioribose-1-phosphate isomerase (358 aa).

Residues 54 to 56 (RGA), Arg96, and Gln205 contribute to the substrate site. The active-site Proton donor is the Asp246. 256–257 (NK) contacts substrate.

This sequence belongs to the eIF-2B alpha/beta/delta subunits family. MtnA subfamily.

The catalysed reaction is 5-(methylsulfanyl)-alpha-D-ribose 1-phosphate = 5-(methylsulfanyl)-D-ribulose 1-phosphate. It functions in the pathway amino-acid biosynthesis; L-methionine biosynthesis via salvage pathway; L-methionine from S-methyl-5-thio-alpha-D-ribose 1-phosphate: step 1/6. Catalyzes the interconversion of methylthioribose-1-phosphate (MTR-1-P) into methylthioribulose-1-phosphate (MTRu-1-P). The sequence is that of Methylthioribose-1-phosphate isomerase from Pseudomonas savastanoi pv. phaseolicola (strain 1448A / Race 6) (Pseudomonas syringae pv. phaseolicola (strain 1448A / Race 6)).